A 74-amino-acid chain; its full sequence is Porwaprin-a (74 aa).

Residues 1 to 24 form the signal peptide; that stretch reads MSSGGLLLLLGLLTLWEVLTPVSS. The 45-residue stretch at 27–71 folds into the WAP domain; that stretch reads RPKKLGLCPPRPQKPCVKECKNDWSCPGQQKCCNYGCIDECRDPI. 4 cysteine pairs are disulfide-bonded: cysteine 34-cysteine 59, cysteine 42-cysteine 63, cysteine 46-cysteine 58, and cysteine 52-cysteine 67.

Belongs to the venom waprin family. Expressed by the venom gland.

It localises to the secreted. Its function is as follows. Damages membranes of susceptible bacteria. Has no hemolytic activity. Not toxic to mice. Does not inhibit the proteinases elastase and cathepsin G. The sequence is that of Porwaprin-a from Pseudechis porphyriacus (Red-bellied black snake).